The sequence spans 295 residues: Iron-sulfur cluster carrier protein (295 aa).

38-45 (GKGGVGKS) contacts ATP.

The protein belongs to the Mrp/NBP35 ATP-binding proteins family. As to quaternary structure, homodimer.

Functionally, binds and transfers iron-sulfur (Fe-S) clusters to target apoproteins. Can hydrolyze ATP. This Pyrococcus horikoshii (strain ATCC 700860 / DSM 12428 / JCM 9974 / NBRC 100139 / OT-3) protein is Iron-sulfur cluster carrier protein.